The sequence spans 430 residues: Gamma-glutamyl phosphate reductase (430 aa).

The protein belongs to the gamma-glutamyl phosphate reductase family.

It localises to the cytoplasm. It carries out the reaction L-glutamate 5-semialdehyde + phosphate + NADP(+) = L-glutamyl 5-phosphate + NADPH + H(+). Its pathway is amino-acid biosynthesis; L-proline biosynthesis; L-glutamate 5-semialdehyde from L-glutamate: step 2/2. Its function is as follows. Catalyzes the NADPH-dependent reduction of L-glutamate 5-phosphate into L-glutamate 5-semialdehyde and phosphate. The product spontaneously undergoes cyclization to form 1-pyrroline-5-carboxylate. The protein is Gamma-glutamyl phosphate reductase of Rhodopseudomonas palustris (strain ATCC BAA-98 / CGA009).